Consider the following 873-residue polypeptide: Probable beta-glucosidase A (873 aa).

An N-terminal signal peptide occupies residues 1-19 (MRFGWLEVAALTAASVANA). 3 N-linked (GlcNAc...) asparagine glycosylation sites follow: N71, N222, and N263. Residue D291 is part of the active site. Residues N326, N333, N365, N453, N534, N553, N575, N679, and N725 are each glycosylated (N-linked (GlcNAc...) asparagine). Residues 730-765 (EDSSDDPNYGWEDSEYIPEGARDGSPQPLLKAGGAP) form a disordered region.

Belongs to the glycosyl hydrolase 3 family.

It localises to the secreted. It catalyses the reaction Hydrolysis of terminal, non-reducing beta-D-glucosyl residues with release of beta-D-glucose.. Its pathway is glycan metabolism; cellulose degradation. Beta-glucosidases are one of a number of cellulolytic enzymes involved in the degradation of cellulosic biomass. Catalyzes the last step releasing glucose from the inhibitory cellobiose. The chain is Probable beta-glucosidase A (bglA) from Neosartorya fischeri (strain ATCC 1020 / DSM 3700 / CBS 544.65 / FGSC A1164 / JCM 1740 / NRRL 181 / WB 181) (Aspergillus fischerianus).